A 461-amino-acid chain; its full sequence is Protein transport protein HofB homolog (461 aa).

222–229 is a binding site for ATP; that stretch reads GPTGSGKT.

This sequence belongs to the GSP E family.

The polypeptide is Protein transport protein HofB homolog (hofB) (Escherichia coli (strain K12)).